A 236-amino-acid polypeptide reads, in one-letter code: Phosphoserine phosphatase (236 aa).

The Nucleophile role is filled by aspartate 30. Positions 30 and 32 each coordinate Mg(2+). Aspartate 32 (proton donor) is an active-site residue. Residues glutamate 39, arginine 76, 120 to 121, and lysine 169 each bind substrate; that span reads SG. Residue aspartate 192 coordinates Mg(2+). Asparagine 195 lines the substrate pocket.

Belongs to the HAD-like hydrolase superfamily. SerB family. Mg(2+) is required as a cofactor.

It catalyses the reaction O-phospho-L-serine + H2O = L-serine + phosphate. It carries out the reaction O-phospho-D-serine + H2O = D-serine + phosphate. It participates in amino-acid biosynthesis; L-serine biosynthesis; L-serine from 3-phospho-D-glycerate: step 3/3. In Polaromonas sp. (strain JS666 / ATCC BAA-500), this protein is Phosphoserine phosphatase.